The primary structure comprises 344 residues: MHQGLTLSRHTNEYAGTDKLRLAVAAAIDAIAAASIDISELIGRGPLAGITGEAQGSSNADGDVQKDLDVRCDEMILAGLQKIPYAALASEESETLVLGDPGAPISVAFDPLDGSSNIDTNMTVGTIFSIVPNKQGEAPFSAPGNVQLAAGFVVYGPQTSLVLTLGNGVDIFTLDRRDRTYKCIRQQVQIPEHTAEFAINASNHRHWEQPVRDFVEECLAGADGPRSKDFNMRWIGSLVAEAYRILTRGGIFLYPGDSRPGYGDGRLRLLYECHPMAFIIEQAGGGASTGRERVLDLAAKSIHQRAPLIMGSVDKVQRIELLHNDPAAATITAPLFGHRGLFRV.

Residues E91, D110, L112, and D113 each contribute to the Mg(2+) site. Substrate contacts are provided by residues D113 to S116 and N200. E272 provides a ligand contact to Mg(2+).

The protein belongs to the FBPase class 1 family. As to quaternary structure, homotetramer. Requires Mg(2+) as cofactor.

It is found in the cytoplasm. It carries out the reaction beta-D-fructose 1,6-bisphosphate + H2O = beta-D-fructose 6-phosphate + phosphate. The protein operates within carbohydrate biosynthesis; Calvin cycle. This chain is Fructose-1,6-bisphosphatase class 1, found in Rhodopseudomonas palustris (strain BisB18).